Reading from the N-terminus, the 276-residue chain is Large ribosomal subunit protein uL2 (276 aa).

Positions G210–K276 are disordered. Positions D230–K240 are enriched in basic and acidic residues. Residues K255–K276 show a composition bias toward basic residues.

Belongs to the universal ribosomal protein uL2 family. As to quaternary structure, part of the 50S ribosomal subunit. Forms a bridge to the 30S subunit in the 70S ribosome.

In terms of biological role, one of the primary rRNA binding proteins. Required for association of the 30S and 50S subunits to form the 70S ribosome, for tRNA binding and peptide bond formation. It has been suggested to have peptidyltransferase activity; this is somewhat controversial. Makes several contacts with the 16S rRNA in the 70S ribosome. The sequence is that of Large ribosomal subunit protein uL2 from Campylobacter jejuni subsp. jejuni serotype O:6 (strain 81116 / NCTC 11828).